The primary structure comprises 207 residues: Frataxin, mitochondrial (207 aa).

A mitochondrion-targeting transit peptide spans 1–40; the sequence is MWAFGGRAAVGLLPRTASRASAWVGNPRWREPIVTCGRRG.

It belongs to the frataxin family. In terms of assembly, component of the mitochondrial core iron-sulfur cluster (ISC) complex composed of NFS1, LYRM4, NDUFAB1, ISCU, FXN, and FDX2; this complex is a heterohexamer containing two copies of each monomer. Homodimer. Monomer (probable predominant form). Oligomer. Monomers and polymeric aggregates of &gt;1 MDa have been isolated from mitochondria. A small fraction of heterologous overexpressed recombinant frataxin forms high-molecular weight aggregates that incorporate iron. Interacts with LYRM4. Interacts (via ferrous form) with ISCU; the interaction is possible when both are bound to the dimeric form of the cysteine desulfurase complex (NFS1:LYRM4) and the interaction enhances FXN interaction to the dimeric form of the cysteine desulfurase complex (NFS1:LYRM4). Interacts with FECH; one iron-bound FXN monomer seems to interact with a FECH homodimer. Interacts with SDHA and SDHB. Interacts with ACO2; the interaction is dependent on citrate. Interacts with HSPA9. Component of a complex composed of FXN, NFS1, LYRM4 and ISCU. Interacts with ACO1. Interacts with ISCU (cytoplasmic form). In terms of processing, processed in two steps by mitochondrial processing peptidase (MPP). MPP first cleaves the precursor to intermediate form and subsequently converts the intermediate to yield frataxin mature form (frataxin(81-210)) which is the predominant form. The additional forms, frataxin(56-210) and frataxin(78-210), seem to be produced when the normal maturation process is impaired; their physiological relevance is unsure. Heart, liver, skeletal muscle, kidney, spleen and thymus. Weakly expressed in the brain and lung.

The protein localises to the mitochondrion. Its subcellular location is the cytoplasm. It is found in the cytosol. It catalyses the reaction 4 Fe(2+) + O2 + 4 H(+) = 4 Fe(3+) + 2 H2O. In terms of biological role, functions as an activator of persulfide transfer to the scaffoding protein ISCU as component of the core iron-sulfur cluster (ISC) assembly complex and participates to the [2Fe-2S] cluster assembly. Accelerates sulfur transfer from NFS1 persulfide intermediate to ISCU and to small thiols such as L-cysteine and glutathione leading to persulfuration of these thiols and ultimately sulfide release. Binds ferrous ion and is released from FXN upon the addition of both L-cysteine and reduced FDX2 during [2Fe-2S] cluster assembly. The core iron-sulfur cluster (ISC) assembly complex is involved in the de novo synthesis of a [2Fe-2S] cluster, the first step of the mitochondrial iron-sulfur protein biogenesis. This process is initiated by the cysteine desulfurase complex (NFS1:LYRM4:NDUFAB1) that produces persulfide which is delivered on the scaffold protein ISCU in a FXN-dependent manner. Then this complex is stabilized by FDX2 which provides reducing equivalents to accomplish the [2Fe-2S] cluster assembly. Finally, the [2Fe-2S] cluster is transferred from ISCU to chaperone proteins, including HSCB, HSPA9 and GLRX5. May play a role in the protection against iron-catalyzed oxidative stress through its ability to catalyze the oxidation of Fe(2+) to Fe(3+); the oligomeric form but not the monomeric form has in vitro ferroxidase activity. May be able to store large amounts of iron in the form of a ferrihydrite mineral by oligomerization; however, the physiological relevance is unsure as reports are conflicting and the function has only been shown using heterologous overexpression systems. May function as an iron chaperone protein that protects the aconitase [4Fe-4S]2+ cluster from disassembly and promotes enzyme reactivation. May play a role as a high affinity iron binding partner for FECH that is capable of both delivering iron to ferrochelatase and mediating the terminal step in mitochondrial heme biosynthesis. Its function is as follows. Modulates the RNA-binding activity of ACO1. May be involved in the cytoplasmic iron-sulfur protein biogenesis. May contribute to oxidative stress resistance and overall cell survival. The sequence is that of Frataxin, mitochondrial from Mus musculus (Mouse).